Reading from the N-terminus, the 320-residue chain is 1-aminocyclopropane-1-carboxylate oxidase 3 (320 aa).

The stretch at 111–131 (NEYRLAMKDFGKRLEILAEEL) forms a coiled coil. The region spanning 155–256 (GPTFATKLSN…RMSIASFYNP (102 aa)) is the Fe2OG dioxygenase domain. Fe cation contacts are provided by His180, Asp182, and His237. Arg247 lines the 2-oxoglutarate pocket.

The protein belongs to the iron/ascorbate-dependent oxidoreductase family. Fe(2+) serves as cofactor.

It catalyses the reaction 1-aminocyclopropane-1-carboxylate + L-ascorbate + O2 = ethene + L-dehydroascorbate + hydrogen cyanide + CO2 + 2 H2O. Its pathway is alkene biosynthesis; ethylene biosynthesis via S-adenosyl-L-methionine; ethylene from S-adenosyl-L-methionine: step 2/2. In terms of biological role, enzyme involved in the ethylene biosynthesis. May promote stem elongation by maximizing the extensibility cells, possibly by activating ethylene biosynthesis, in response to very-long-chain fatty acids (VLCFAs C20:0 to C30:0). The protein is 1-aminocyclopropane-1-carboxylate oxidase 3 of Arabidopsis thaliana (Mouse-ear cress).